Here is a 543-residue protein sequence, read N- to C-terminus: Cytochrome P450 monooxygenase 205 (543 aa).

Residues 9 to 29 form a helical membrane-spanning segment; the sequence is LISLGVAALAVAVWKAIVMVI. 2 N-linked (GlcNAc...) asparagine glycosylation sites follow: Asn-332 and Asn-434. Cys-479 provides a ligand contact to heme.

Belongs to the cytochrome P450 family. Requires heme as cofactor.

The protein localises to the membrane. Its pathway is secondary metabolite biosynthesis. In terms of biological role, cytochrome P450 monooxygenase that is able to use carbazole and phenanthrene as substrates for oxidation. The polypeptide is Cytochrome P450 monooxygenase 205 (Postia placenta (strain ATCC 44394 / Madison 698-R) (Brown rot fungus)).